The primary structure comprises 76 residues: uncharacterized protein (76 aa).

This is an uncharacterized protein from Archaeoglobus fulgidus (strain ATCC 49558 / DSM 4304 / JCM 9628 / NBRC 100126 / VC-16).